A 234-amino-acid polypeptide reads, in one-letter code: Transcriptional regulatory protein CseB (234 aa).

The region spanning His6–Leu119 is the Response regulatory domain. 4-aspartylphosphate is present on Asp55. A DNA-binding region (ompR/PhoB-type) is located at residues Gly140 to Ala234.

Post-translationally, phosphorylated by CseC.

It localises to the cytoplasm. Its function is as follows. Member of the two-component regulatory system CseB/CseC involved in the stability of the cell envelope. CseB activates transcription of RNA polymerase sigma-E factor, in response to changes in the cell envelope. The chain is Transcriptional regulatory protein CseB (cseB) from Streptomyces coelicolor (strain ATCC BAA-471 / A3(2) / M145).